Consider the following 103-residue polypeptide: Urease subunit beta (103 aa).

The protein belongs to the urease beta subunit family. As to quaternary structure, heterotrimer of UreA (gamma), UreB (beta) and UreC (alpha) subunits. Three heterotrimers associate to form the active enzyme.

The protein localises to the cytoplasm. The enzyme catalyses urea + 2 H2O + H(+) = hydrogencarbonate + 2 NH4(+). It functions in the pathway nitrogen metabolism; urea degradation; CO(2) and NH(3) from urea (urease route): step 1/1. The polypeptide is Urease subunit beta (Streptomyces coelicolor (strain ATCC BAA-471 / A3(2) / M145)).